Reading from the N-terminus, the 276-residue chain is Large ribosomal subunit protein uL2 (276 aa).

The disordered stretch occupies residues 224–254 (VMNPVDHPHGGGEGRTSGGRHPVTPWGVPTK).

This sequence belongs to the universal ribosomal protein uL2 family. In terms of assembly, part of the 50S ribosomal subunit. Forms a bridge to the 30S subunit in the 70S ribosome.

Its function is as follows. One of the primary rRNA binding proteins. Required for association of the 30S and 50S subunits to form the 70S ribosome, for tRNA binding and peptide bond formation. It has been suggested to have peptidyltransferase activity; this is somewhat controversial. Makes several contacts with the 16S rRNA in the 70S ribosome. This chain is Large ribosomal subunit protein uL2, found in Gluconobacter oxydans (strain 621H) (Gluconobacter suboxydans).